Consider the following 179-residue polypeptide: Inorganic pyrophosphatase (179 aa).

K30, R44, and Y56 together coordinate substrate. D66, D71, and D103 together coordinate Mg(2+). Y143 contributes to the substrate binding site.

This sequence belongs to the PPase family. In terms of assembly, homohexamer. Mg(2+) serves as cofactor.

The protein localises to the cytoplasm. It catalyses the reaction diphosphate + H2O = 2 phosphate + H(+). Catalyzes the hydrolysis of inorganic pyrophosphate (PPi) forming two phosphate ions. This is Inorganic pyrophosphatase from Wigglesworthia glossinidia brevipalpis.